Consider the following 361-residue polypeptide: MATTIPVPLPQSPYQVQIVPGGLAAIADHLAPLGLGKKIMVVSNPEIYDYYGEVVIQALQRAGYEVFQHLIPAGETHKTLASINELYDVAFQANLERNSTLLSLGGGVIGDMTGFGAATWLRGINFVQVPTSLLAMVDASIGGKTGVNHPQGKNLIGAFYQPRLVYIDPVVLKTLPEREFRAGMAEVIKYGVIWDSELFTALEEAEDLSSIDRLPDELLTKIIQRSCQAKVDVVSQDEKEAGLRAILNYGHTVGHGVESLTGYGVINHGEAVAIGMEAAAKIAHYLGLCDQSLGDRQRQLLLKTKLPTEMPPTLAVENLLASLLHDKKVKAGKVRFILPTAIGQVTISDAVTDEVIKATLG.

NAD(+) is bound by residues 107–111, 131–132, K144, and K153; these read GVIGD and TS. E186, H251, and H268 together coordinate Zn(2+).

Belongs to the sugar phosphate cyclases superfamily. Dehydroquinate synthase family. The cofactor is NAD(+). Co(2+) is required as a cofactor. Requires Zn(2+) as cofactor.

It is found in the cytoplasm. It carries out the reaction 7-phospho-2-dehydro-3-deoxy-D-arabino-heptonate = 3-dehydroquinate + phosphate. It participates in metabolic intermediate biosynthesis; chorismate biosynthesis; chorismate from D-erythrose 4-phosphate and phosphoenolpyruvate: step 2/7. Its function is as follows. Catalyzes the conversion of 3-deoxy-D-arabino-heptulosonate 7-phosphate (DAHP) to dehydroquinate (DHQ). This chain is 3-dehydroquinate synthase, found in Synechocystis sp. (strain ATCC 27184 / PCC 6803 / Kazusa).